Consider the following 388-residue polypeptide: Na(+)/H(+) antiporter NhaA (388 aa).

Residues 1–11 (MKHLHRFFSSD) are Cytoplasmic-facing. Residues 12 to 31 (ASGGIILIIAAILAMIMANS) traverse the membrane as a helical segment. Residues 32 to 58 (GATSGWYHDFLETPVQLRVGSLEINKN) are Periplasmic-facing. The chain crosses the membrane as a helical span at residues 59–80 (MLLWINDALMAVFFLLVGLEVK). The Cytoplasmic portion of the chain corresponds to 81 to 96 (RELMQGSLASLRQAAF). Residues 97 to 116 (PVIAAIGGMIVPALLYLAFN) traverse the membrane as a helical segment. The Periplasmic segment spans residues 117–122 (YADPIT). A helical membrane pass occupies residues 123–130 (REGWAIPA). Over 131–154 (ATDIAFALGVLALLGSRVPLVLKI) the chain is Cytoplasmic. Residues 155–176 (FLMALAIIDDLGAIIIIALFYT) traverse the membrane as a helical segment. Residues 177 to 180 (NDLS) are Periplasmic-facing. Residues 181–200 (MASLGVAAVAIAVLAVLNLC) traverse the membrane as a helical segment. The Cytoplasmic portion of the chain corresponds to 201–204 (GVRR). The chain crosses the membrane as a helical span at residues 205-222 (TGVYILVGVVLWTAVLKS). A topological domain (periplasmic) is located at residue Gly223. A helical transmembrane segment spans residues 224–236 (VHATLAGVIVGFF). Residues 237–253 (IPLKEKHGRSPAKRLEH) lie on the Cytoplasmic side of the membrane. A helical transmembrane segment spans residues 254–272 (VLHPWVAYLILPLFAFANA). Over 273–286 (GVSLQGVTLDGLTS) the chain is Periplasmic. Residues 287-310 (ILPLGIIAGLLIGKPLGISLFCWL) traverse the membrane as a helical segment. At 311–339 (ALRLKLAHLPEGTTYQQIMVVGILCGIGF) the chain is on the cytoplasmic side. The chain crosses the membrane as a helical span at residues 340–350 (TMSIFIASLAF). The Periplasmic segment spans residues 351-357 (GSVDPEL). A helical transmembrane segment spans residues 358-380 (INWAKLGILVGSISSAVIGYSWL). Over 381 to 388 (RVRLRPSV) the chain is Cytoplasmic.

Belongs to the NhaA Na(+)/H(+) (TC 2.A.33) antiporter family.

Its subcellular location is the cell inner membrane. It catalyses the reaction Na(+)(in) + 2 H(+)(out) = Na(+)(out) + 2 H(+)(in). In terms of biological role, na(+)/H(+) antiporter that extrudes sodium in exchange for external protons. This Shigella flexneri protein is Na(+)/H(+) antiporter NhaA.